The following is a 138-amino-acid chain: MMTKTQINKLIKMMNDLDYPFEAPLKESFIESIIQIEFNSNSTNCLEKLCNEVSILFKNQPDYLTFLRAMDGFEVNGLRLFSLSIPEPSVKNLFAVNEFYRNNDDFINPDLQERLVIGDYSISIFTYDIKGDAANLLI.

This is an uncharacterized protein from Escherichia coli (strain K12).